A 76-amino-acid chain; its full sequence is Sec-independent protein translocase protein TatA (76 aa).

Residues 1 to 21 (MGGISIWQLLIIALIVVLLFG) form a helical membrane-spanning segment. Residues 43–76 (MSSEDEKKAIEDTSAEKTAQTEEKKTESKDKEQA) form a disordered region. The segment covering 46–76 (EDEKKAIEDTSAEKTAQTEEKKTESKDKEQA) has biased composition (basic and acidic residues).

It belongs to the TatA/E family. In terms of assembly, the Tat system comprises two distinct complexes: a TatABC complex, containing multiple copies of TatA, TatB and TatC subunits, and a separate TatA complex, containing only TatA subunits. Substrates initially bind to the TatABC complex, which probably triggers association of the separate TatA complex to form the active translocon.

The protein localises to the cell inner membrane. Part of the twin-arginine translocation (Tat) system that transports large folded proteins containing a characteristic twin-arginine motif in their signal peptide across membranes. TatA could form the protein-conducting channel of the Tat system. The sequence is that of Sec-independent protein translocase protein TatA from Shewanella loihica (strain ATCC BAA-1088 / PV-4).